The sequence spans 391 residues: B2 bradykinin receptor (391 aa).

The Extracellular portion of the chain corresponds to 1–60; the sequence is MFSPWKISMFLSVREDSVPTTASFSADMLNVTLQGPTLNGTFAQSKCPQVEWLGWLNTIQ. Asparagine 30 and asparagine 39 each carry an N-linked (GlcNAc...) asparagine glycan. A helical transmembrane segment spans residues 61 to 84; that stretch reads PPFLWVLFVLATLENIFVLSVFCL. The Cytoplasmic portion of the chain corresponds to 85–93; it reads HKSSCTVAE. A helical transmembrane segment spans residues 94-118; sequence IYLGNLAAADLILACGLPFWAITIS. Residues 119–131 are Extracellular-facing; the sequence is NNFDWLFGETLCR. Residues cysteine 130 and cysteine 211 are joined by a disulfide bond. Residues 132–153 form a helical membrane-spanning segment; that stretch reads VVNAIISMNLYSSICFLMLVSI. Residues 154 to 175 are Cytoplasmic-facing; sequence DRYLALVKTMSMGRMRGVRWAK. The residue at position 156 (tyrosine 156) is a Phosphotyrosine. Residues 176–198 traverse the membrane as a helical segment; the sequence is LYSLVIWGCTLLLSSPMLVFRTM. The Extracellular segment spans residues 199 to 221; that stretch reads KEYSDEGHNVTACVISYPSLIWE. Asparagine 207 carries N-linked (GlcNAc...) asparagine glycosylation. The chain crosses the membrane as a helical span at residues 222 to 248; sequence VFTNMLLNVVGFLLPLSVITFCTMQIM. Over 249–267 the chain is Cytoplasmic; sequence QVLRNNEMQKFKEIQTERR. The chain crosses the membrane as a helical span at residues 268-292; the sequence is ATVLVLVVLLLFIICWLPFQISTFL. Residues 293–311 are Extracellular-facing; it reads DTLHRLGILSSCQDERIID. Residues 312–335 form a helical membrane-spanning segment; the sequence is VITQIASFMAYSNSCLNPLVYVIV. Over 336–391 the chain is Cytoplasmic; sequence GKRFRKKSWEVYQGVCQKGGCRSEPIQMENSMGTLRTSISVERQIHKLQDWAGSRQ. Position 347 is a phosphotyrosine (tyrosine 347). Cysteine 351 is lipidated: S-palmitoyl cysteine. Serine 366 is subject to Phosphoserine. At threonine 369 the chain carries Phosphothreonine. Residues serine 373 and serine 375 each carry the phosphoserine; by GRK6 modification.

The protein belongs to the G-protein coupled receptor 1 family. Bradykinin receptor subfamily. BDKRB2 sub-subfamily. In terms of assembly, forms a complex with PECAM1 and GNAQ. Interacts with PECAM1. Ubiquitous. Widespread in normal smooth muscle tissue and neurons.

The protein localises to the cell membrane. In terms of biological role, receptor for bradykinin. It is associated with G proteins that activate a phosphatidylinositol-calcium second messenger system. The polypeptide is B2 bradykinin receptor (BDKRB2) (Homo sapiens (Human)).